The chain runs to 196 residues: Homeobox protein ANF-1 (196 aa).

The homeobox DNA-binding region spans 119 to 178 (GRRPRTAFTRNQIEVLENVFKMNSYPGIDIREELARKLDLEEDRIQIWFQNRRAKLKRSH).

Belongs to the ANF homeobox family.

The protein resides in the nucleus. Functionally, may be involved in the early patterning of the most anterior region of the main embryonic body axis. This chain is Homeobox protein ANF-1, found in Gallus gallus (Chicken).